The following is a 322-amino-acid chain: Thymidylate synthase (322 aa).

Residues Arg25 and 184–185 contribute to the dUMP site; that span reads RR. Catalysis depends on Cys204, which acts as the Nucleophile. DUMP contacts are provided by residues 224 to 227, Asn235, and 265 to 267; these read RSGD and HIY. Asp227 provides a ligand contact to (6R)-5,10-methylene-5,6,7,8-tetrahydrofolate. A (6R)-5,10-methylene-5,6,7,8-tetrahydrofolate-binding site is contributed by Ala321.

This sequence belongs to the thymidylate synthase family. Bacterial-type ThyA subfamily. As to quaternary structure, homodimer.

It is found in the cytoplasm. It carries out the reaction dUMP + (6R)-5,10-methylene-5,6,7,8-tetrahydrofolate = 7,8-dihydrofolate + dTMP. The protein operates within pyrimidine metabolism; dTTP biosynthesis. Its function is as follows. Catalyzes the reductive methylation of 2'-deoxyuridine-5'-monophosphate (dUMP) to 2'-deoxythymidine-5'-monophosphate (dTMP) while utilizing 5,10-methylenetetrahydrofolate (mTHF) as the methyl donor and reductant in the reaction, yielding dihydrofolate (DHF) as a by-product. This enzymatic reaction provides an intracellular de novo source of dTMP, an essential precursor for DNA biosynthesis. The chain is Thymidylate synthase from Leuconostoc mesenteroides subsp. mesenteroides (strain ATCC 8293 / DSM 20343 / BCRC 11652 / CCM 1803 / JCM 6124 / NCDO 523 / NBRC 100496 / NCIMB 8023 / NCTC 12954 / NRRL B-1118 / 37Y).